Reading from the N-terminus, the 72-residue chain is MSKEEVLEFSGIVTELLPNAMFRVKLENDHEIIAHTAGRMRKNRIRVLAGDKIMVEMTPYDLTKGRITYRYK.

The S1-like domain maps to 1-72; it reads MSKEEVLEFS…TKGRITYRYK (72 aa).

This sequence belongs to the IF-1 family. In terms of assembly, component of the 30S ribosomal translation pre-initiation complex which assembles on the 30S ribosome in the order IF-2 and IF-3, IF-1 and N-formylmethionyl-tRNA(fMet); mRNA recruitment can occur at any time during PIC assembly.

Its subcellular location is the cytoplasm. One of the essential components for the initiation of protein synthesis. Stabilizes the binding of IF-2 and IF-3 on the 30S subunit to which N-formylmethionyl-tRNA(fMet) subsequently binds. Helps modulate mRNA selection, yielding the 30S pre-initiation complex (PIC). Upon addition of the 50S ribosomal subunit IF-1, IF-2 and IF-3 are released leaving the mature 70S translation initiation complex. The sequence is that of Translation initiation factor IF-1 from Bartonella quintana (strain Toulouse) (Rochalimaea quintana).